Here is a 308-residue protein sequence, read N- to C-terminus: Phosphoribosylaminoimidazole-succinocarboxamide synthase (308 aa).

It belongs to the SAICAR synthetase family.

It carries out the reaction 5-amino-1-(5-phospho-D-ribosyl)imidazole-4-carboxylate + L-aspartate + ATP = (2S)-2-[5-amino-1-(5-phospho-beta-D-ribosyl)imidazole-4-carboxamido]succinate + ADP + phosphate + 2 H(+). The protein operates within purine metabolism; IMP biosynthesis via de novo pathway; 5-amino-1-(5-phospho-D-ribosyl)imidazole-4-carboxamide from 5-amino-1-(5-phospho-D-ribosyl)imidazole-4-carboxylate: step 1/2. The sequence is that of Phosphoribosylaminoimidazole-succinocarboxamide synthase from Stenotrophomonas maltophilia (strain R551-3).